The primary structure comprises 194 residues: Imidazoleglycerol-phosphate dehydratase (194 aa).

Belongs to the imidazoleglycerol-phosphate dehydratase family.

The protein resides in the cytoplasm. It carries out the reaction D-erythro-1-(imidazol-4-yl)glycerol 3-phosphate = 3-(imidazol-4-yl)-2-oxopropyl phosphate + H2O. Its pathway is amino-acid biosynthesis; L-histidine biosynthesis; L-histidine from 5-phospho-alpha-D-ribose 1-diphosphate: step 6/9. The protein is Imidazoleglycerol-phosphate dehydratase of Rubrobacter xylanophilus (strain DSM 9941 / JCM 11954 / NBRC 16129 / PRD-1).